The chain runs to 119 residues: Beta-2-microglobulin (119 aa).

The signal sequence occupies residues 1–20 (MARFVVVPLFVLLSLFGLEA). Residues 25 to 114 (PKIQVYSRYP…VTFSTPKTVK (90 aa)) enclose the Ig-like C1-type domain. Cys-45 and Cys-100 are oxidised to a cystine.

This sequence belongs to the beta-2-microglobulin family. In terms of assembly, heterodimer of an alpha chain and a beta chain. Beta-2-microglobulin is the beta-chain of major histocompatibility complex class I molecules.

Its subcellular location is the secreted. Its function is as follows. Component of the class I major histocompatibility complex (MHC). Involved in the presentation of peptide antigens to the immune system. The polypeptide is Beta-2-microglobulin (B2M) (Saguinus niger (Black tamarin)).